The primary structure comprises 60 residues: Large ribosomal subunit protein bL32 (60 aa).

The protein belongs to the bacterial ribosomal protein bL32 family.

This is Large ribosomal subunit protein bL32 from Ruminiclostridium cellulolyticum (strain ATCC 35319 / DSM 5812 / JCM 6584 / H10) (Clostridium cellulolyticum).